Consider the following 490-residue polypeptide: Interferon-induced protein with tetratricopeptide repeats 3 (490 aa).

8 TPR repeats span residues 51-84, 94-127, 136-169, 172-206, 207-240, 241-274, 415-448, and 450-481; these read ATMYNLLAYIKHLDGNNEAALECLRQAEELIQQE, LVTWGNYAWVYYHLGRLSDAQIYVDKVKQTCKKF, SELDCEEGWTQLKCGRNERAKVCFEKALEEKPNN, FSSGLAIAMYHLDNHPEKQFSTDVLKQAIELSPDN, QYVKVLLGLKLQKMNKEAEGEQFVEEALEKSPCQ, TDVLRSAAKFYRRKGDLDKAIELFQRVLESTPNN, PNYWYLQGLIHKQNGDLLQAAKCYEKELGRLLRD, and PSGIGSIFLSASELEDGSEEMGQGAVSSSPRE. A phosphoserine mark is found at S203 and S237. The segment at 467–490 is disordered; that stretch reads SEEMGQGAVSSSPRELLSNSEQLN. Polar residues predominate over residues 474-490; the sequence is AVSSSPRELLSNSEQLN. S478 is modified (phosphoserine).

Belongs to the IFIT family. As to quaternary structure, component of an interferon-dependent multiprotein complex, at least composed of IFIT1, IFIT2 and IFIT3. Interacts with IFIT1 and IFIT2. Interacts (via N-terminus) with MAVS, TBK1, TRAF6 and RIGI. Interacts with COPS5. As to expression, expression significantly higher in peripheral blood mononuclear cells (PBMCs) and monocytes from systemic lupus erythematosus (SLE) patients than in those from healthy individuals (at protein level). Spleen, lung, leukocytes, lymph nodes, placenta, bone marrow and fetal liver.

The protein resides in the cytoplasm. It is found in the mitochondrion. IFN-induced antiviral protein which acts as an inhibitor of cellular as well as viral processes, cell migration, proliferation, signaling, and viral replication. Enhances MAVS-mediated host antiviral responses by serving as an adapter bridging TBK1 to MAVS which leads to the activation of TBK1 and phosphorylation of IRF3 and phosphorylated IRF3 translocates into nucleus to promote antiviral gene transcription. Exhibits an antiproliferative activity via the up-regulation of cell cycle negative regulators CDKN1A/p21 and CDKN1B/p27. Normally, CDKN1B/p27 turnover is regulated by COPS5, which binds CDKN1B/p27 in the nucleus and exports it to the cytoplasm for ubiquitin-dependent degradation. IFIT3 sequesters COPS5 in the cytoplasm, thereby increasing nuclear CDKN1B/p27 protein levels. Up-regulates CDKN1A/p21 by down-regulating MYC, a repressor of CDKN1A/p21. Can negatively regulate the apoptotic effects of IFIT2. This is Interferon-induced protein with tetratricopeptide repeats 3 (IFIT3) from Homo sapiens (Human).